Consider the following 935-residue polypeptide: Coiled-coil domain-containing protein 66 (935 aa).

Residues 76-96 (LDTSQAKPENSRLTFSPSTDK) are compositionally biased toward polar residues. The tract at residues 76 to 103 (LDTSQAKPENSRLTFSPSTDKQYSEKDS) is disordered. The residue at position 114 (Thr-114) is a Phosphothreonine. Ser-366 bears the Phosphoserine mark. A coiled-coil region spans residues 462 to 555 (LEHQKAIMAQ…EQRIRELAQK (94 aa)). Disordered regions lie at residues 470–491 (AQVE…KEEQ), 577–602 (TISS…DTGV), and 738–794 (ENLS…RTQQ). The segment covering 473–491 (EENRRKKRLEEEQRKKEEQ) has biased composition (basic and acidic residues). The mediates localization to cilia, centrosomes and spindle microtubules and the interaction with PCM1, CEP290, CEP104 and CSPP1 stretch occupies residues 567-935 (GAQVDYKAFT…NQEDNFSSSF (369 aa)). Residues 590-602 (DTSTASPKKDTGV) show a composition bias toward polar residues. The residue at position 595 (Ser-595) is a Phosphoserine. Over residues 752–782 (SHRETESESRLHLIKKVEEPLKTPSVSKERF) the composition is skewed to basic and acidic residues. A compositionally biased stretch (polar residues) spans 783–794 (QTSPAVKNRTQQ).

In terms of assembly, homodimer; disulfide-linked. Interacts with CEP290. Interacts with PCM1. Interacts with ARMC9, TOGARAM1, CSPP1 and CEP104. Interacts with CDK5RAP2, CEP152, CEP192, TBG1 and PRC1. In terms of tissue distribution, widely expressed. Expressed in retina by rod photoreceptors but also detected in outer plexiform and ganglion cell layers (at protein level).

It localises to the cytoplasm. It is found in the cytoskeleton. The protein localises to the microtubule organizing center. The protein resides in the centrosome. Its subcellular location is the centriolar satellite. It localises to the cell projection. It is found in the cilium. The protein localises to the cilium basal body. The protein resides in the cilium axoneme. Its subcellular location is the photoreceptor inner segment. It localises to the photoreceptor outer segment. Functionally, microtubule-binding protein required for ciliogenesis. May function in ciliogenesis by mediating the transport of proteins like BBS4 to the cilium, but also through the organization of the centriolar satellites. Required for the assembly of signaling-competent cilia with proper structure and length. Mediates this function in part by regulating transition zone assembly and basal body recruitment of the IFT-B complex. Cooperates with the ciliopathy proteins CSPP1 and CEP104 during cilium length regulation. Plays two important roles during cell division. First, is required for mitotic progression via regulation of spindle assembly, organization and orientation, levels of spindle microtubules (MTs), kinetochore-fiber integrity, and chromosome alignment. Second, functions during cytokinesis in part by regulating assembly and organization of central spindle and midbody MTs. Plays a role in retina morphogenesis and/or homeostasis. The protein is Coiled-coil domain-containing protein 66 of Mus musculus (Mouse).